Reading from the N-terminus, the 333-residue chain is MKPFPTHPDAIPAELQDVMDRLGSVAIEVANRIARGGIDEDLAGLCGTNTDGDGQKALDVIADDAFRVALEGSAVRFYASEEQDTAVTLNEAGTLALAIDPLDGSSNIDTNLSVGTTFAIWPAAPRPNPSFLRLGSELIAAGYVIYGPQVCMMVSFGKGTQKYVLDPGSRSFVLVDRAVKVPPSSTEFAINASNYRHWPKPIRAYIDDCVAGTEGPRGRNFNMRWLASLVAETHRILARGGVFLYPRDSRKGYEQGRLRYLYECAPIAFVITQAGGGATDGENPILGQTPSRLHARTPFVFGSAEKVARITAYHDLPEQETSALFGNRGLFRS.

4 residues coordinate Mg(2+): Glu-81, Asp-100, Leu-102, and Asp-103. Substrate contacts are provided by residues 103–106 and Asn-191; that span reads DGSS. Glu-263 serves as a coordination point for Mg(2+).

This sequence belongs to the FBPase class 1 family. As to quaternary structure, homotetramer. It depends on Mg(2+) as a cofactor.

The protein localises to the cytoplasm. The enzyme catalyses beta-D-fructose 1,6-bisphosphate + H2O = beta-D-fructose 6-phosphate + phosphate. It functions in the pathway carbohydrate biosynthesis; gluconeogenesis. Fructose-1,6-bisphosphatase II is not light-activated. The sequence is that of Fructose-1,6-bisphosphatase class 1 1 from Cereibacter sphaeroides (Rhodobacter sphaeroides).